A 767-amino-acid chain; its full sequence is 5-methyltetrahydropteroyltriglutamate--homocysteine methyltransferase (767 aa).

Residues lysine 19 and asparagine 126 each coordinate 5-methyltetrahydropteroyltri-L-glutamate. L-homocysteine is bound by residues 446-448 and glutamate 499; that span reads IGS. Residues 446-448 and glutamate 499 each bind L-methionine; that span reads IGS. 5-methyltetrahydropteroyltri-L-glutamate is bound by residues aspartate 504, tyrosine 527, 530–531, and tryptophan 576; that span reads RY. L-homocysteine is bound at residue aspartate 614. An L-methionine-binding site is contributed by aspartate 614. The Zn(2+) site is built by histidine 657, cysteine 659, and glutamate 679. Histidine 707 (proton donor) is an active-site residue. Zn(2+) is bound at residue cysteine 739.

This sequence belongs to the vitamin-B12 independent methionine synthase family. Zn(2+) is required as a cofactor.

It catalyses the reaction 5-methyltetrahydropteroyltri-L-glutamate + L-homocysteine = tetrahydropteroyltri-L-glutamate + L-methionine. It functions in the pathway amino-acid biosynthesis; L-methionine biosynthesis via de novo pathway; L-methionine from L-homocysteine (MetE route): step 1/1. Inhibited weakly by methotrexate. Its function is as follows. Catalyzes the transfer of a methyl group from 5-methyltetrahydrofolate to homocysteine resulting in methionine formation. This is 5-methyltetrahydropteroyltriglutamate--homocysteine methyltransferase from Candida albicans (strain SC5314 / ATCC MYA-2876) (Yeast).